Consider the following 68-residue polypeptide: MIRMGFFLTLTVAVLLTSLICTEAVPTDKRGMERLFDHVLLKDQRQCPYCVVHCCPPSYCQASGCRPP.

The N-terminal stretch at 1-24 (MIRMGFFLTLTVAVLLTSLICTEA) is a signal peptide. Residues 25–45 (VPTDKRGMERLFDHVLLKDQR) constitute a propeptide that is removed on maturation. Cystine bridges form between cysteine 47–cysteine 55, cysteine 50–cysteine 60, and cysteine 54–cysteine 65.

This sequence belongs to the conotoxin U superfamily. Expressed by the venom duct.

It is found in the secreted. This is Conotoxin Vc7.4 from Conus victoriae (Queen Victoria cone).